The sequence spans 86 residues: Large ribosomal subunit protein bL27 (86 aa).

This sequence belongs to the bacterial ribosomal protein bL27 family.

The sequence is that of Large ribosomal subunit protein bL27 from Christiangramia forsetii (strain DSM 17595 / CGMCC 1.15422 / KT0803) (Gramella forsetii).